We begin with the raw amino-acid sequence, 219 residues long: Transcriptional regulatory protein QseB (219 aa).

The 115-residue stretch at 2-116 folds into the Response regulatory domain; sequence RILLVEDDTL…EVAARLEALV (115 aa). Position 51 is a 4-aspartylphosphate (Asp-51). Positions 124–218 form a DNA-binding region, ompR/PhoB-type; it reads SSELRHGQVT…VHGIGYTLGD (95 aa).

Post-translationally, phosphorylated by QseC.

It is found in the cytoplasm. Member of a two-component regulatory system QseB/QseC. Activates the flagella regulon by activating transcription of flhDC. The polypeptide is Transcriptional regulatory protein QseB (qseB) (Salmonella typhimurium (strain LT2 / SGSC1412 / ATCC 700720)).